The primary structure comprises 451 residues: MSLPTSLWDKCLGYLRDEIPPQQYNTWIRPLHAIESKQNGLLLLAPNRFVLDWINERFLNRITELLDELSDTPPQIRLQIGSRSTEMPTKNSHEPSHRKAAAPPAGTTISHTQANINSNFTFDSFVEGKSNQLARAAATQVAENPGQAYNPLFIYGGVGLGKTHLMHAVGNAILRKDSSKKVLYLHSERFVADMIKALQHNAMNEFKRFYRSLNALLIDDIQFFAGKDRSQEEFFHTFNALLDGQQQIILTCDRYPKEINGLEERLQSRFGWGLTVAIEPPELETRVAILMSKAEQLKVHLPHEVAFFIAKHIQSNVRELEGALKRVIANAHFTGQSITVDFTREALKDLLTLQARLITIENIQKTVAEYYKIKVADLLAKRRNRSVARPRQMAMALAKELTNHSLPEIGDAFGGRDHTTVLHACRKVKELLATSLDILEDYKNLMRILSG.

Residues 1-72 are domain I, interacts with DnaA modulators; it reads MSLPTSLWDK…TELLDELSDT (72 aa). A domain II region spans residues 72–114; the sequence is TPPQIRLQIGSRSTEMPTKNSHEPSHRKAAAPPAGTTISHTQA. Over residues 81–90 the composition is skewed to polar residues; the sequence is GSRSTEMPTK. Positions 81–106 are disordered; the sequence is GSRSTEMPTKNSHEPSHRKAAAPPAG. Residues 115–331 form a domain III, AAA+ region region; it reads NINSNFTFDS…GALKRVIANA (217 aa). Positions 159, 161, 162, and 163 each coordinate ATP. The domain IV, binds dsDNA stretch occupies residues 332 to 451; it reads HFTGQSITVD…YKNLMRILSG (120 aa).

Belongs to the DnaA family. In terms of assembly, oligomerizes as a right-handed, spiral filament on DNA at oriC.

The protein resides in the cytoplasm. Functionally, plays an essential role in the initiation and regulation of chromosomal replication. ATP-DnaA binds to the origin of replication (oriC) to initiate formation of the DNA replication initiation complex once per cell cycle. Binds the DnaA box (a 9 base pair repeat at the origin) and separates the double-stranded (ds)DNA. Forms a right-handed helical filament on oriC DNA; dsDNA binds to the exterior of the filament while single-stranded (ss)DNA is stabiized in the filament's interior. The ATP-DnaA-oriC complex binds and stabilizes one strand of the AT-rich DNA unwinding element (DUE), permitting loading of DNA polymerase. After initiation quickly degrades to an ADP-DnaA complex that is not apt for DNA replication. Binds acidic phospholipids. The sequence is that of Chromosomal replication initiator protein DnaA from Coxiella burnetii (strain CbuK_Q154) (Coxiella burnetii (strain Q154)).